A 261-amino-acid polypeptide reads, in one-letter code: Thioesterase TesA (261 aa).

A disordered region spans residues 1-24 (MLARHGPRYGGSVNGHSDDSSGDA). Residues serine 104, aspartate 208, and histidine 236 contribute to the active site.

This sequence belongs to the thioesterase family.

It catalyses the reaction a fatty acyl-CoA + H2O = a fatty acid + CoA + H(+). Its function is as follows. Involved in the synthesis of both phthiocerol dimycocerosates (PDIMs) and phenolic glycolipids (PGLs), which are structurally related lipids non-covalently bound to the outer cell wall layer of M.tuberculosis and are important virulence factors. In Mycobacterium bovis (strain ATCC BAA-935 / AF2122/97), this protein is Thioesterase TesA (tesA).